A 119-amino-acid chain; its full sequence is MSKGCQTQGPLSELEKAIDVIIDVFHQYSRREGDKDTLTRKELKLLIEKQLANYLKHVKNQVSIDQIFKDLDNNKDQQLSFGEVMLLIIRVTVATHEHLHFCEDHQQQHQHQHQHQHNH.

EF-hand domains are found at residues D23–V58 and K59–A94. Residues T37, E42, D72, N74, D76, Q78, and E83 each contribute to the Ca(2+) site.

The protein belongs to the S-100 family. As to expression, expressed in v-myb-transformed myelomonocytic cells.

The polypeptide is Protein MRP-126 (Gallus gallus (Chicken)).